A 629-amino-acid polypeptide reads, in one-letter code: Mitochondrial Rho GTPase 1 (629 aa).

The Cytoplasmic portion of the chain corresponds to 1–600 (MSTAVRICVC…PRSEEPPADR (600 aa)). The 169-residue stretch at 2–170 (STAVRICVCG…FYLCQKAVTH (169 aa)) folds into the Miro 1 domain. Residues 11–18 (GDEGTGKS), 59–63 (DTSAR), and 115–118 (NKSD) contribute to the GTP site. EF-hand domains are found at residues 186-221 (ACVD…SFDK) and 306-341 (AGYR…TPGL). Residues Asp-199, Asp-201, Asp-203, Tyr-205, Glu-210, Asp-319, Asp-321, Asp-323, and Glu-330 each coordinate Ca(2+). Residues 421 to 585 (RNVVLCYILG…FVALAEAATN (165 aa)) enclose the Miro 2 domain. Residues 430-437 (GSSGAGKS), 466-470 (ELQGG), and 535-538 (LKAD) contribute to the GTP site. Residues 601 to 621 (ASLYMALGATACAALAAFMIW) form a helical; Anchor for type IV membrane protein membrane-spanning segment. Topologically, residues 622 to 629 (RRSTSNAA) are mitochondrial intermembrane.

The protein belongs to the mitochondrial Rho GTPase family.

It is found in the mitochondrion outer membrane. Functionally, mitochondrial GTPase involved in mitochondrial trafficking. Probably involved in control of anterograde transport of mitochondria and their subcellular distribution. The sequence is that of Mitochondrial Rho GTPase 1 (gem-1) from Neurospora crassa (strain ATCC 24698 / 74-OR23-1A / CBS 708.71 / DSM 1257 / FGSC 987).